Here is a 2148-residue protein sequence, read N- to C-terminus: Polyketide synthase 1 (2148 aa).

Residues 19–261 (FIFGDQSSCN…TPLAVHAPYH (243 aa)) form an N-terminal acylcarrier protein transacylase domain (SAT) region. A Ketosynthase family 3 (KS3) domain is found at 394–829 (DSKIAIIGMS…GGNTALLVED (436 aa)). Residues C566, H701, and H745 each act as for beta-ketoacyl synthase activity in the active site. The segment at 929 to 1233 (AFVFSGQGSQ…PSLMRNKDGW (305 aa)) is malonyl-CoA:ACP transacylase (MAT) domain. Residue S1018 is the For acyl/malonyl transferase activity of the active site. Residues 1310 to 1624 (TASVHRIVHE…RKVLNTAMPP (315 aa)) form a product template (PT) domain region. Residues 1314–1447 (HRIVHESVDK…SSLHFEQPKV (134 aa)) are N-terminal hotdog fold. The PKS/mFAS DH domain occupies 1314-1619 (HRIVHESVDK…FQGIPRKVLN (306 aa)). The active-site Proton acceptor; for dehydratase activity is the H1346. The tract at residues 1474–1619 (LNSRMSSGVI…FQGIPRKVLN (146 aa)) is C-terminal hotdog fold. D1533 acts as the Proton donor; for dehydratase activity in catalysis. Positions 1619–1655 (NTAMPPPKSQNEAQVHSSPAKSRPKPPGSASSVHSGR) are disordered. Over residues 1627–1638 (SQNEAQVHSSPA) the composition is skewed to polar residues. A Carrier 1 domain is found at 1678-1752 (RDPMQALFKI…DLATHLGFDT (75 aa)). O-(pantetheine 4'-phosphoryl)serine is present on S1712. Positions 1756–1769 (DQSSGQSSSCGGLS) are enriched in low complexity. The tract at residues 1756–1796 (DQSSGQSSSCGGLSPRSDSTGEITSNATTPPSLSPRGSVSG) is disordered. Polar residues predominate over residues 1771–1796 (RSDSTGEITSNATTPPSLSPRGSVSG). The Carrier 2 domain maps to 1793 to 1870 (SVSGSQCKDV…SFKHMFQQGH (78 aa)). S1830 bears the O-(pantetheine 4'-phosphoryl)serine mark. The interval 1882 to 2146 (LKQYRATSTL…ERVAAFIRST (265 aa)) is thioesterase (TE) domain. S1973 (for thioesterase activity) is an active-site residue.

Functionally, polyketide synthase; part of the Pks1 gene cluster that mediates the biosynthesis of an anthraquinone derivative pigment that contributes to conidial pigmentation that provides protection from UV radiation, heat and cold stress. The polyketide synthase Pks1 produces 1-acetyl-2,4,6,8-tetrahydroxy-9,10-anthraquinone though condensation of acetyl-CoA with malonyl-CoA. The dehydratase EthD and the laccase Mlac1 further convert the anthraquinone derivative into the final conidial pigment. This chain is Polyketide synthase 1, found in Metarhizium acridum (strain CQMa 102).